A 211-amino-acid polypeptide reads, in one-letter code: Large ribosomal subunit protein bL25 (211 aa).

The protein belongs to the bacterial ribosomal protein bL25 family. CTC subfamily. In terms of assembly, part of the 50S ribosomal subunit; part of the 5S rRNA/L5/L18/L25 subcomplex. Contacts the 5S rRNA. Binds to the 5S rRNA independently of L5 and L18.

In terms of biological role, this is one of the proteins that binds to the 5S RNA in the ribosome where it forms part of the central protuberance. The protein is Large ribosomal subunit protein bL25 of Methylobacterium nodulans (strain LMG 21967 / CNCM I-2342 / ORS 2060).